A 767-amino-acid chain; its full sequence is Pyrin (767 aa).

Residues M1–T92 form the Pyrin domain. The segment at H94–G219 is disordered. 3 stretches are compositionally biased toward polar residues: residues G126 to A142, L165 to T176, and T183 to G208. Phosphoserine is present on S241. The tract at residues T311–S346 is disordered. Residues T321 to T340 show a composition bias toward polar residues. The segment at Q439–I481 adopts a B box-type zinc-finger fold. Zn(2+)-binding residues include C444, H447, C467, and H473. A coiled-coil region spans residues I481–R510. The required for homotrimerization and induction of pyroptosomes stretch occupies residues K489–M647. Residues G697 to I719 are disordered.

Homotrimer. Interacts (via the B box-type zinc finger) with PSTPIP1. Interacts (via the B30.2/SPRY domain) with several components of the inflammasome complex, including CASP1 p20 and p10 subunits, CASP5, PYCARD, NLRP1, NLRP2 and NLRP3, as well as with unprocessed IL1B; this interaction may lead to autophagic degradation of these proteins. Component of the AIM2 PANoptosome complex, a multiprotein complex that drives inflammatory cell death (PANoptosis). Interacts with NFKBIA and RELA. Interacts weakly with VASP and ACTR3. Interacts with active ULK1 (phosphorylated on 'Ser-317') and BECN1 simultaneously. Also interacts with ATG16L1 (via WD repeats), and with ATG8 family members, including GABARAP, GABARAPL1 and, to a lesser extent, GABARAPL2, MAP1LC3A/LC3A and MAP1LC3C/LC3C. Interacts with TRIM21. Interacts with YWHAB, YWHAE, YWHAG, YWHAH, YWHAQ and YWHAZ; the interaction is required for the down-regulation of pyrin pro-inflammatory activity. Phosphorylation at Ser-241 is required for the interaction with 14-3-3 proteins and down-regulation of pyrin pro-inflammatory activity. In terms of processing, degraded along with the delivery of its substrates to autolysosomal compartments (at protein level). As to expression, expressed in spleen peripheral blood granulocytes. Not expressed in lymphocytes, thymus, testis, ovary, heart, brain, lung, liver, kidney and muscle.

Its subcellular location is the cytoplasm. It is found in the cytoskeleton. It localises to the cell projection. The protein resides in the ruffle. The protein localises to the lamellipodium. Its subcellular location is the cytoplasmic vesicle. It is found in the autophagosome. It localises to the nucleus. Its function is as follows. Involved in the regulation of innate immunity and the inflammatory response in response to IFNG/IFN-gamma. Organizes autophagic machinery by serving as a platform for the assembly of ULK1, Beclin 1/BECN1, ATG16L1, and ATG8 family members and recognizes specific autophagy targets, thus coordinating target recognition with assembly of the autophagic apparatus and initiation of autophagy. Acts as an autophagy receptor for the degradation of several inflammasome components, including CASP1, NLRP1 and NLRP3, hence preventing excessive IL1B- and IL18-mediated inflammation. However, it can also have a positive effect in the inflammatory pathway, acting as an innate immune sensor that triggers PYCARD/ASC specks formation, caspase-1 activation, and IL1B and IL18 production. Together with AIM2, also acts as a mediator of pyroptosis, necroptosis and apoptosis (PANoptosis), an integral part of host defense against pathogens, in response to bacterial infection. It is required for PSTPIP1-induced PYCARD/ASC oligomerization and inflammasome formation. Recruits PSTPIP1 to inflammasomes, and is required for PSTPIP1 oligomerization. This chain is Pyrin, found in Mus musculus (Mouse).